The following is a 205-amino-acid chain: Methylthioribulose-1-phosphate dehydratase (205 aa).

Cys-75 provides a ligand contact to substrate. Residues His-93 and His-95 each contribute to the Zn(2+) site. The Proton donor/acceptor role is filled by Glu-116. His-171 is a binding site for Zn(2+).

The protein belongs to the aldolase class II family. MtnB subfamily. It depends on Zn(2+) as a cofactor.

The protein resides in the cytoplasm. It carries out the reaction 5-(methylsulfanyl)-D-ribulose 1-phosphate = 5-methylsulfanyl-2,3-dioxopentyl phosphate + H2O. It functions in the pathway amino-acid biosynthesis; L-methionine biosynthesis via salvage pathway; L-methionine from S-methyl-5-thio-alpha-D-ribose 1-phosphate: step 2/6. Its function is as follows. Catalyzes the dehydration of methylthioribulose-1-phosphate (MTRu-1-P) into 2,3-diketo-5-methylthiopentyl-1-phosphate (DK-MTP-1-P). The sequence is that of Methylthioribulose-1-phosphate dehydratase from Kluyveromyces lactis (strain ATCC 8585 / CBS 2359 / DSM 70799 / NBRC 1267 / NRRL Y-1140 / WM37) (Yeast).